The primary structure comprises 365 residues: Autoinducer 2-binding periplasmic protein LuxP (365 aa).

The signal sequence occupies residues 1–23 (MKKALLFSLISMVGFSPASQATQ).

This sequence belongs to the bacterial solute-binding protein 2 family.

It is found in the periplasm. Its function is as follows. Binds to the signaling molecule autoinducer 2 (AI-2), a furanosyl borate diester, (3a-methyl-5,6-dihydrofuro-[2,3d][1,3,2]dioxaborole-2,2,6,6a-tetraol). This complex then interacts with the LuxQ sensor protein. In Vibrio harveyi (Beneckea harveyi), this protein is Autoinducer 2-binding periplasmic protein LuxP (luxP).